A 234-amino-acid chain; its full sequence is Inner membrane protein YbhL (234 aa).

Topologically, residues 1 to 23 are periplasmic; that stretch reads MDRFPRSDSIVQPRAGLQTYMAQ. The helical transmembrane segment at 24 to 44 threads the bilayer; the sequence is VYGWMTVGLLLTAFVAWYAAN. Over 45 to 56 the chain is Cytoplasmic; that stretch reads SAAVMELLFTNR. A helical transmembrane segment spans residues 57-77; the sequence is VFLIGLIIAQLALVIVLSAMI. The Periplasmic portion of the chain corresponds to 78-79; sequence QK. The chain crosses the membrane as a helical span at residues 80–100; that stretch reads LSAGVTTMLFMLYSALTGLTL. Residues 101–102 lie on the Cytoplasmic side of the membrane; that stretch reads SS. A helical membrane pass occupies residues 103 to 123; sequence IFIVYTAASIASTFVVTAGMF. The Periplasmic segment spans residues 124 to 136; it reads GAMSLYGYTTKRD. The chain crosses the membrane as a helical span at residues 137-157; the sequence is LSGFGNMLFMALIGIVLASLV. Residues 158-163 lie on the Cytoplasmic side of the membrane; that stretch reads NFWLKS. The helical transmembrane segment at 164–184 threads the bilayer; it reads EALMWAVTYIGVIVFVGLTAY. Residues 185 to 206 lie on the Periplasmic side of the membrane; the sequence is DTQKLKNMGEQIDTRDTSNLRK. The chain crosses the membrane as a helical span at residues 207-227; the sequence is YSILGALTLYLDFINLFLMLL. Residues 228–234 lie on the Cytoplasmic side of the membrane; the sequence is RIFGNRR.

This sequence belongs to the BI1 family.

It localises to the cell inner membrane. This chain is Inner membrane protein YbhL (ybhL), found in Escherichia coli (strain K12).